Here is a 157-residue protein sequence, read N- to C-terminus: Probable succinate transporter subunit YjjB (157 aa).

The next 4 helical transmembrane spans lie at 15–35 (ILAA…VQAL), 50–70 (MILM…SMLV), 87–107 (VFTV…TAMI), and 121–141 (LMIT…ALSV).

The protein belongs to the ThrE exporter (TC 2.A.79) family. In terms of assembly, the transporter is composed of YjjB and YjjP.

Its subcellular location is the cell inner membrane. Its function is as follows. Involved in succinate export with YjjP. Both proteins are required for export. The protein is Probable succinate transporter subunit YjjB of Shigella dysenteriae serotype 1 (strain Sd197).